The primary structure comprises 81 residues: U6-theraphotoxin-Hs1a (81 aa).

The first 21 residues, 1–21, serve as a signal peptide directing secretion; sequence MKASMFLALAGLVLLFVVCYA. Residues 22–48 constitute a propeptide that is removed on maturation; sequence SESEEKEFPRELLSTIFAVDDFKGEER. Intrachain disulfides connect C50–C65 and C57–C70.

The protein belongs to the neurotoxin 10 (Hwtx-1) family. 51 (Hntx-8) subfamily. Expressed by the venom gland.

The protein resides in the secreted. Functionally, binds to the nicotinic acetylcholine receptor. Blocks neuromuscular transmission. This is U6-theraphotoxin-Hs1a from Cyriopagopus schmidti (Chinese bird spider).